We begin with the raw amino-acid sequence, 100 residues long: uncharacterized protein (100 aa).

Residues 28–45 traverse the membrane as a helical segment; sequence VFLVFYIITMVKIYIFLI.

The protein resides in the membrane. This is an uncharacterized protein from Saccharomyces cerevisiae (strain ATCC 204508 / S288c) (Baker's yeast).